The chain runs to 248 residues: 2,3-bisphosphoglycerate-dependent phosphoglycerate mutase (248 aa).

Residues 8–15, 21–22, arginine 60, 87–90, lysine 98, 114–115, and 183–184 contribute to the substrate site; these read RHGESTWN, TG, ERHY, RR, and GN. Histidine 9 (tele-phosphohistidine intermediate) is an active-site residue. Glutamate 87 acts as the Proton donor/acceptor in catalysis.

The protein belongs to the phosphoglycerate mutase family. BPG-dependent PGAM subfamily.

The enzyme catalyses (2R)-2-phosphoglycerate = (2R)-3-phosphoglycerate. It functions in the pathway carbohydrate degradation; glycolysis; pyruvate from D-glyceraldehyde 3-phosphate: step 3/5. Catalyzes the interconversion of 2-phosphoglycerate and 3-phosphoglycerate. This is 2,3-bisphosphoglycerate-dependent phosphoglycerate mutase from Solibacter usitatus (strain Ellin6076).